We begin with the raw amino-acid sequence, 59 residues long: Large ribosomal subunit protein uL30 (59 aa).

It belongs to the universal ribosomal protein uL30 family. Part of the 50S ribosomal subunit.

This Desulfatibacillum aliphaticivorans protein is Large ribosomal subunit protein uL30.